We begin with the raw amino-acid sequence, 607 residues long: Dolichyl-diphosphooligosaccharide--protein glycosyltransferase subunit 1 (607 aa).

The signal sequence occupies residues 1-24 (MEVPTARLLLLLLLGAWAPAPESA). Residues 25 to 434 (SPEAPLLVNE…VVHYTFNKVL (410 aa)) lie on the Lumenal side of the membrane. The residue at position 187 (Lys187) is an N6-acetyllysine. An N-linked (GlcNAc...) asparagine glycan is attached at Asn299. The chain crosses the membrane as a helical span at residues 435 to 455 (MLQEPLLVVAAFYILFFTVII). Over 456–607 (YVRLDFSITK…TKIDHILDAL (152 aa)) the chain is Cytoplasmic. At Lys538 the chain carries N6-acetyllysine; alternate. Residue Lys538 forms a Glycyl lysine isopeptide (Lys-Gly) (interchain with G-Cter in SUMO2); alternate linkage.

This sequence belongs to the OST1 family. Component of the oligosaccharyltransferase (OST) complex. OST exists in two different complex forms which contain common core subunits RPN1, RPN2, OST48, OST4, DAD1 and TMEM258, either STT3A or STT3B as catalytic subunits, and form-specific accessory subunits. STT3A complex assembly occurs through the formation of 3 subcomplexes. Subcomplex 1 contains RPN1 and TMEM258, subcomplex 2 contains the STT3A-specific subunits STT3A, DC2/OSTC, and KCP2 as well as the core subunit OST4, and subcomplex 3 contains RPN2, DAD1, and OST48. The STT3A complex can form stable complexes with the Sec61 complex or with both the Sec61 and TRAP complexes. Interacts with TMEM35A/NACHO. In terms of processing, ubiquitinated by the ECS(ASB11) complex. Ufmylated by UFL1 in response to endoplasmic reticulum stress, promoting reticulophagy of endoplasmic reticulum sheets.

It localises to the endoplasmic reticulum membrane. The protein operates within protein modification; protein glycosylation. Functionally, subunit of the oligosaccharyl transferase (OST) complex that catalyzes the initial transfer of a defined glycan (Glc(3)Man(9)GlcNAc(2) in eukaryotes) from the lipid carrier dolichol-pyrophosphate to an asparagine residue within an Asn-X-Ser/Thr consensus motif in nascent polypeptide chains, the first step in protein N-glycosylation. N-glycosylation occurs cotranslationally and the complex associates with the Sec61 complex at the channel-forming translocon complex that mediates protein translocation across the endoplasmic reticulum (ER). All subunits are required for a maximal enzyme activity. The polypeptide is Dolichyl-diphosphooligosaccharide--protein glycosyltransferase subunit 1 (Canis lupus familiaris (Dog)).